A 270-amino-acid chain; its full sequence is Tryptophan synthase alpha chain (270 aa).

Catalysis depends on proton acceptor residues glutamate 49 and aspartate 60.

This sequence belongs to the TrpA family. Tetramer of two alpha and two beta chains.

It catalyses the reaction (1S,2R)-1-C-(indol-3-yl)glycerol 3-phosphate + L-serine = D-glyceraldehyde 3-phosphate + L-tryptophan + H2O. Its pathway is amino-acid biosynthesis; L-tryptophan biosynthesis; L-tryptophan from chorismate: step 5/5. Functionally, the alpha subunit is responsible for the aldol cleavage of indoleglycerol phosphate to indole and glyceraldehyde 3-phosphate. The polypeptide is Tryptophan synthase alpha chain (Buchnera aphidicola subsp. Melaphis rhois).